The sequence spans 240 residues: Ribose-5-phosphate isomerase (240 aa).

Substrate contacts are provided by residues 34–37 (SGST), 88–91 (DGAD), and 101–104 (KGGG). Residue E110 is the Proton acceptor of the active site. Substrate is bound at residue K128.

The protein belongs to the ribose 5-phosphate isomerase family.

The protein localises to the cytoplasm. The catalysed reaction is aldehydo-D-ribose 5-phosphate = D-ribulose 5-phosphate. Its pathway is carbohydrate degradation; pentose phosphate pathway; D-ribose 5-phosphate from D-ribulose 5-phosphate (non-oxidative stage): step 1/1. Involved in the first step of the non-oxidative branch of the pentose phosphate pathway. It catalyzes the reversible conversion of ribose-5-phosphate to ribulose 5-phosphate. In Candida albicans (strain SC5314 / ATCC MYA-2876) (Yeast), this protein is Ribose-5-phosphate isomerase (RKI1).